We begin with the raw amino-acid sequence, 246 residues long: MIIPAIDLIEGQVVRLYQGDYAQKTTFDLSPLSQLKSYEAQGANWLHIVDLTGAKDPNARQTRLIAGLVSGLDANIQVGGGIRTEAQLAELLEIGVKRVVIGSLAVKETALVQSWFKKYGADAICLALDVNINEQGEKIVAVSGWQSGGGKSLESLVDAFKPYGLKHALVTDISRDGTLKGANTDLYREIAAAYPDINWQASGGIATLDDVAAVRDSGADGIIIGKALLIENFTVREAIQCWPNPQ.

D7 functions as the Proton acceptor in the catalytic mechanism. The active-site Proton donor is the D129.

Belongs to the HisA/HisF family.

The protein localises to the cytoplasm. The catalysed reaction is 1-(5-phospho-beta-D-ribosyl)-5-[(5-phospho-beta-D-ribosylamino)methylideneamino]imidazole-4-carboxamide = 5-[(5-phospho-1-deoxy-D-ribulos-1-ylimino)methylamino]-1-(5-phospho-beta-D-ribosyl)imidazole-4-carboxamide. The protein operates within amino-acid biosynthesis; L-histidine biosynthesis; L-histidine from 5-phospho-alpha-D-ribose 1-diphosphate: step 4/9. In Shewanella sediminis (strain HAW-EB3), this protein is 1-(5-phosphoribosyl)-5-[(5-phosphoribosylamino)methylideneamino] imidazole-4-carboxamide isomerase.